Consider the following 641-residue polypeptide: 1-deoxy-D-xylulose-5-phosphate synthase (641 aa).

Thiamine diphosphate contacts are provided by residues H79 and 120 to 122; that span reads GHS. D151 contributes to the Mg(2+) binding site. Residues 152–153, N180, Y291, and E375 contribute to the thiamine diphosphate site; that span reads GS. N180 is a Mg(2+) binding site.

This sequence belongs to the transketolase family. DXPS subfamily. In terms of assembly, homodimer. Requires Mg(2+) as cofactor. Thiamine diphosphate serves as cofactor.

The catalysed reaction is D-glyceraldehyde 3-phosphate + pyruvate + H(+) = 1-deoxy-D-xylulose 5-phosphate + CO2. The protein operates within metabolic intermediate biosynthesis; 1-deoxy-D-xylulose 5-phosphate biosynthesis; 1-deoxy-D-xylulose 5-phosphate from D-glyceraldehyde 3-phosphate and pyruvate: step 1/1. In terms of biological role, catalyzes the acyloin condensation reaction between C atoms 2 and 3 of pyruvate and glyceraldehyde 3-phosphate to yield 1-deoxy-D-xylulose-5-phosphate (DXP). The polypeptide is 1-deoxy-D-xylulose-5-phosphate synthase (Nitratidesulfovibrio vulgaris (strain ATCC 29579 / DSM 644 / CCUG 34227 / NCIMB 8303 / VKM B-1760 / Hildenborough) (Desulfovibrio vulgaris)).